A 53-amino-acid polypeptide reads, in one-letter code: Unknown protein from 2D-PAGE of needles (53 aa).

The chain is Unknown protein from 2D-PAGE of needles from Pinus pinaster (Maritime pine).